We begin with the raw amino-acid sequence, 476 residues long: Fatty acid hydroperoxide lyase, chloroplastic (476 aa).

A helical membrane pass occupies residues 280-300; the sequence is LLFILGFNAFGGFSIFLPTLL. Position 438 (C438) interacts with heme.

The protein belongs to the cytochrome P450 family. Heme serves as cofactor. As to expression, highly expressed in developing flowers and in young leaves. Detected in stems and immature green fruits, but not in mature green and red fruits.

It localises to the plastid. It is found in the chloroplast outer membrane. With respect to regulation, reversibly inhibited by nordihydroguaiaretic acid (NDGA) and irreversibly by salicylic acid. Functionally, cytochrome P450 of the CYP74B subfamily involved in the biosynthesis of traumatin and C6 aldehydes. Metabolizes 13- but not 9-hydroperoxides of linoleic and linolenic acids. Can use 15S-hydroperoxy-11(Z),13(E),17(Z)-eicosatrienoic acid (15-HPET) and 13S-hydroperoxy-9(Z),11(E),15(Z)-octadecatrienoic acid (13-HPOT) as substrates, but only 5% activity with 13S-hydroperoxy-9(Z),11(E)-octadecadienoic acid (13-HPOD). Produces n-hexanal and 12-oxo-9(Z)-dodecanoic acid from 13-HPOD. This Solanum lycopersicum (Tomato) protein is Fatty acid hydroperoxide lyase, chloroplastic.